The sequence spans 359 residues: CCAAT/enhancer-binding protein alpha (359 aa).

The segment at 1 to 55 (MESADFYEVEPRPPMSSHLQSPPHAPSNAAFGFPRGAGPAPPPAPPAAPEPLGGI) is disordered. Residues 1-70 (MESADFYEVE…SIDISAYIDP (70 aa)) are required to repress E2F1:TFDP1-mediated transcription, to inhibit cell cycle and to induce adipocyte differentiation. A compositionally biased stretch (low complexity) spans 29–38 (AAFGFPRGAG). Residues 39–49 (PAPPPAPPAAP) show a composition bias toward pro residues. Residues 54 to 72 (GICEHETSIDISAYIDPAA) form a required for interaction with TRIB1 region. The required to induce adipocyte differentiation stretch occupies residues 126 to 200 (PPGYGCAAAG…HASPAHLAAP (75 aa)). At Lys-159 the chain carries N6-acetyllysine; alternate. Lys-159 participates in a covalent cross-link: Glycyl lysine isopeptide (Lys-Gly) (interchain with G-Cter in SUMO); alternate. Residue Lys-159 forms a Glycyl lysine isopeptide (Lys-Gly) (interchain with G-Cter in SUMO2); alternate linkage. 2 disordered regions span residues 176–195 (LFPY…ASPA) and 213–293 (TMHL…RERN). Positions 179–191 (YQPPPPPPPPHPH) are enriched in pro residues. The tract at residues 180-194 (QPPPPPPPPHPHASP) is required to functionally cooperate with SREBF1 in promoter activation. Position 193 is a phosphoserine (Ser-193). Over residues 220 to 232 (HPTPPPTPVPSPH) the composition is skewed to pro residues. Residues Thr-222 and Thr-226 each carry the phosphothreonine; by GSK3 modification. Phosphoserine; by GSK3 is present on Ser-230. Over residues 233–255 (AAPALGAAGLPGPGSALKGLAGA) the composition is skewed to low complexity. The segment at 240-359 (AGLPGPGSAL…SLVKAMGNCA (120 aa)) is interaction with FOXO1. Gly residues predominate over residues 261 to 272 (TGGGGGGSGAGA). Basic and acidic residues predominate over residues 277–293 (KSVDKNSNEYRVRRERN). In terms of domain architecture, bZIP spans 283-346 (SNEYRVRRER…DTLRGIFRQL (64 aa)). A DNA-binding region spans residues 286–301 (YRVRRERNNIAVRKSR). Residues 287–314 (RVRRERNNIAVRKSRDKAKQRNVETQQK) form a basic motif region. The segment at 318-346 (LTSDNDRLRKRVEQLSRELDTLRGIFRQL) is leucine-zipper.

It belongs to the bZIP family. C/EBP subfamily. As to quaternary structure, binds DNA as a homodimer and as a heterodimer. Can form stable heterodimers with CEBPB, CEBPD, CEBPE and CEBPG. Interacts with PRDM16. Interacts with UBN1. Interacts with ZNF638; this interaction increases transcriptional activation. Interacts with the complex TFDP2:E2F1; the interaction prevents CEBPA binding to target gene promoters and represses its transcriptional activity. Interacts with RB1. Interacts (when phosphorylated at Ser-193) with CDK2, CDK4, E2F4 and SMARCA2. Interacts with SREBPF1. Interacts with FOXO1 (via the Fork-head domain); the interaction increases when FOXO1 is deacetylated. Interacts with SIX1. Interacts (via recognition sequence) with TRIB1. Interacts (via bZIP domain) with OVOL2 (via zinc-finger domains); the interaction inhibits the transcription factor activity of CEBPA and is required to repress adipogenesis. In terms of assembly, interacts with TAF1A and UBTF. Interacts with TAF1A and UBTF. Interacts with NPM1. Post-translationally, sumoylated, sumoylation blocks the inhibitory effect on cell proliferation by disrupting the interaction with SMARCA2. Phosphorylation at Ser-193 is required for interaction with CDK2, CDK4 and SWI/SNF complex leading to cell cycle inhibition. Dephosphorylated at Ser-193 by protein phosphatase 2A (PP2A) through PI3K/AKT signaling pathway regulation. Phosphorylation at Thr-222 and Thr-226 by GSK3 is constitutive in adipose tissue and lung. In liver, both Thr-222 and Thr-226 are phosphorylated only during feeding but not during fasting. Phosphorylation of the GSK3 consensus sites selectively decreases transactivation activity on IRE-controlled promoters. In terms of processing, ubiquitinated by COP1 upon interaction with TRIB1. In terms of tissue distribution, isoform 2 and isoform 3 are expressed in adipose tissue and liver (at protein level).

It localises to the nucleus. Its subcellular location is the nucleolus. Its function is as follows. Transcription factor that coordinates proliferation arrest and the differentiation of myeloid progenitors, adipocytes, hepatocytes, and cells of the lung and the placenta. Binds directly to the consensus DNA sequence 5'-T[TG]NNGNAA[TG]-3' acting as an activator on distinct target genes. During early embryogenesis, plays essential and redundant functions with CEBPB. Essential for the transition from common myeloid progenitors (CMP) to granulocyte/monocyte progenitors (GMP). Critical for the proper development of the liver and the lung. Necessary for terminal adipocyte differentiation, is required for postnatal maintenance of systemic energy homeostasis and lipid storage. To regulate these different processes at the proper moment and tissue, interplays with other transcription factors and modulators. Down-regulates the expression of genes that maintain cells in an undifferentiated and proliferative state through E2F1 repression, which is critical for its ability to induce adipocyte and granulocyte terminal differentiation. Reciprocally E2F1 blocks adipocyte differentiation by binding to specific promoters and repressing CEBPA binding to its target gene promoters. Proliferation arrest also depends on a functional binding to SWI/SNF complex. In liver, regulates gluconeogenesis and lipogenesis through different mechanisms. To regulate gluconeogenesis, functionally cooperates with FOXO1 binding to IRE-controlled promoters and regulating the expression of target genes such as PCK1 or G6PC1. To modulate lipogenesis, interacts and transcriptionally synergizes with SREBF1 in promoter activation of specific lipogenic target genes such as ACAS2. In adipose tissue, seems to act as FOXO1 coactivator accessing to ADIPOQ promoter through FOXO1 binding sites. In terms of biological role, can act as dominant-negative. Binds DNA and have transctivation activity, even if much less efficiently than isoform 2. Does not inhibit cell proliferation. Functionally, directly and specifically enhances ribosomal DNA transcription interacting with RNA polymerase I-specific cofactors and inducing histone acetylation. The protein is CCAAT/enhancer-binding protein alpha of Mus musculus (Mouse).